We begin with the raw amino-acid sequence, 367 residues long: Alanine racemase (367 aa).

The active-site Proton acceptor; specific for D-alanine is lysine 40. Lysine 40 is subject to N6-(pyridoxal phosphate)lysine. Position 136 (arginine 136) interacts with substrate. Tyrosine 263 functions as the Proton acceptor; specific for L-alanine in the catalytic mechanism. Methionine 310 provides a ligand contact to substrate.

The protein belongs to the alanine racemase family. Pyridoxal 5'-phosphate serves as cofactor.

It catalyses the reaction L-alanine = D-alanine. The protein operates within amino-acid biosynthesis; D-alanine biosynthesis; D-alanine from L-alanine: step 1/1. In terms of biological role, catalyzes the interconversion of L-alanine and D-alanine. May also act on other amino acids. This chain is Alanine racemase (alr), found in Streptococcus thermophilus (strain CNRZ 1066).